The primary structure comprises 131 residues: Small ribosomal subunit protein uS11 (131 aa).

Belongs to the universal ribosomal protein uS11 family. As to quaternary structure, part of the 30S ribosomal subunit. Interacts with proteins S7 and S18. Binds to IF-3.

Its function is as follows. Located on the platform of the 30S subunit, it bridges several disparate RNA helices of the 16S rRNA. Forms part of the Shine-Dalgarno cleft in the 70S ribosome. This Granulibacter bethesdensis (strain ATCC BAA-1260 / CGDNIH1) protein is Small ribosomal subunit protein uS11.